The chain runs to 455 residues: Bifunctional protein GlmU (455 aa).

The interval 1 to 226 (MIAVAILAAG…YQEILGINDR (226 aa)) is pyrophosphorylase. UDP-N-acetyl-alpha-D-glucosamine-binding positions include 7-10 (LAAG), Lys21, Gln73, and 78-79 (GT). Asp103 provides a ligand contact to Mg(2+). UDP-N-acetyl-alpha-D-glucosamine is bound by residues Gly140, Glu155, Asn170, and Asn224. Asn224 is a Mg(2+) binding site. Residues 227-247 (KQLATAYKILQDRIKDDWLVA) are linker. The segment at 248–455 (GVTIMDPDSI…RPISSKQTEK (208 aa)) is N-acetyltransferase. Residues Arg329 and Lys347 each coordinate UDP-N-acetyl-alpha-D-glucosamine. The active-site Proton acceptor is His359. UDP-N-acetyl-alpha-D-glucosamine contacts are provided by Tyr362 and Asn373. Acetyl-CoA is bound by residues Ala376, 382–383 (NY), Ala419, and Arg436.

This sequence in the N-terminal section; belongs to the N-acetylglucosamine-1-phosphate uridyltransferase family. The protein in the C-terminal section; belongs to the transferase hexapeptide repeat family. In terms of assembly, homotrimer. It depends on Mg(2+) as a cofactor.

The protein resides in the cytoplasm. It carries out the reaction alpha-D-glucosamine 1-phosphate + acetyl-CoA = N-acetyl-alpha-D-glucosamine 1-phosphate + CoA + H(+). It catalyses the reaction N-acetyl-alpha-D-glucosamine 1-phosphate + UTP + H(+) = UDP-N-acetyl-alpha-D-glucosamine + diphosphate. Its pathway is nucleotide-sugar biosynthesis; UDP-N-acetyl-alpha-D-glucosamine biosynthesis; N-acetyl-alpha-D-glucosamine 1-phosphate from alpha-D-glucosamine 6-phosphate (route II): step 2/2. It participates in nucleotide-sugar biosynthesis; UDP-N-acetyl-alpha-D-glucosamine biosynthesis; UDP-N-acetyl-alpha-D-glucosamine from N-acetyl-alpha-D-glucosamine 1-phosphate: step 1/1. The protein operates within bacterial outer membrane biogenesis; LPS lipid A biosynthesis. Its function is as follows. Catalyzes the last two sequential reactions in the de novo biosynthetic pathway for UDP-N-acetylglucosamine (UDP-GlcNAc). The C-terminal domain catalyzes the transfer of acetyl group from acetyl coenzyme A to glucosamine-1-phosphate (GlcN-1-P) to produce N-acetylglucosamine-1-phosphate (GlcNAc-1-P), which is converted into UDP-GlcNAc by the transfer of uridine 5-monophosphate (from uridine 5-triphosphate), a reaction catalyzed by the N-terminal domain. The polypeptide is Bifunctional protein GlmU (Acaryochloris marina (strain MBIC 11017)).